The sequence spans 366 residues: Glutamate 5-kinase (366 aa).

K17 is an ATP binding site. The substrate site is built by S57, D144, and N156. Residues 176–177 and 216–222 contribute to the ATP site; these read SD and TGGMASK. The PUA domain occupies 278–352; it reads RGALVLDDGA…GRSTTELPDT (75 aa).

It belongs to the glutamate 5-kinase family.

It localises to the cytoplasm. It carries out the reaction L-glutamate + ATP = L-glutamyl 5-phosphate + ADP. The protein operates within amino-acid biosynthesis; L-proline biosynthesis; L-glutamate 5-semialdehyde from L-glutamate: step 1/2. Functionally, catalyzes the transfer of a phosphate group to glutamate to form L-glutamate 5-phosphate. This chain is Glutamate 5-kinase, found in Nocardia farcinica (strain IFM 10152).